A 265-amino-acid polypeptide reads, in one-letter code: 3-methyl-2-oxobutanoate hydroxymethyltransferase (265 aa).

Residues Asp45 and Asp84 each contribute to the Mg(2+) site. 3-methyl-2-oxobutanoate is bound by residues 45-46, Asp84, and Lys112; that span reads DS. Glu114 provides a ligand contact to Mg(2+). The active-site Proton acceptor is Glu181.

This sequence belongs to the PanB family. Homodecamer; pentamer of dimers. Requires Mg(2+) as cofactor.

It is found in the cytoplasm. It carries out the reaction 3-methyl-2-oxobutanoate + (6R)-5,10-methylene-5,6,7,8-tetrahydrofolate + H2O = 2-dehydropantoate + (6S)-5,6,7,8-tetrahydrofolate. Its pathway is cofactor biosynthesis; (R)-pantothenate biosynthesis; (R)-pantoate from 3-methyl-2-oxobutanoate: step 1/2. Functionally, catalyzes the reversible reaction in which hydroxymethyl group from 5,10-methylenetetrahydrofolate is transferred onto alpha-ketoisovalerate to form ketopantoate. This chain is 3-methyl-2-oxobutanoate hydroxymethyltransferase, found in Pseudoalteromonas atlantica (strain T6c / ATCC BAA-1087).